The chain runs to 177 residues: Large ribosomal subunit protein uL10 (177 aa).

The protein belongs to the universal ribosomal protein uL10 family. In terms of assembly, part of the ribosomal stalk of the 50S ribosomal subunit. The N-terminus interacts with L11 and the large rRNA to form the base of the stalk. The C-terminus forms an elongated spine to which L12 dimers bind in a sequential fashion forming a multimeric L10(L12)X complex.

Forms part of the ribosomal stalk, playing a central role in the interaction of the ribosome with GTP-bound translation factors. The polypeptide is Large ribosomal subunit protein uL10 (Caldanaerobacter subterraneus subsp. tengcongensis (strain DSM 15242 / JCM 11007 / NBRC 100824 / MB4) (Thermoanaerobacter tengcongensis)).